A 486-amino-acid polypeptide reads, in one-letter code: uncharacterized protein (486 aa).

The chain crosses the membrane as a helical span at residues 7 to 28; sequence HVISIFETVGAYFINIFYNFLY. N-linked (GlcNAc...) asparagine; by host glycosylation is found at asparagine 73, asparagine 83, and asparagine 195. Residues 183-233 adopt a coiled-coil conformation; sequence ELEETYARLSSYNRSLLYQIEELTSEKKSFLEELSTLRKKYEKRQSEYRRL. The tract at residues 299-329 is disordered; the sequence is SQEVTSKSPNNYPVPQSRTIVNKPSDNYPVP. Polar residues predominate over residues 300-323; the sequence is QEVTSKSPNNYPVPQSRTIVNKPS. An N-linked (GlcNAc...) asparagine; by host glycan is attached at asparagine 461.

This sequence belongs to the asfivirus B475L family.

The protein localises to the host membrane. This is an uncharacterized protein from Ornithodoros (relapsing fever ticks).